The chain runs to 385 residues: MVKYISILGSTGSIGTSALDVVSAHPEHFKIVGLTANYNIDLLEQQIKTFQPRIVSVATKDLADKLRTRISANTKITHGTDGFIAVATHPDSNLVLSSVVGVSGLLPTIEALKAKKDIAIANKETLVAAGHIVTELAKQNGCRLIPVDSEHSAIFQCLKGENNKEIEKLIVTASGGAFRDKTRDEMQTLQAKDALKHPNWLMGAKLTIDSATLMNKGFEVMEARWLFDIPYKKINVMIHKESIIHSLVEFIDGSVMAQLGAPDMRMPIQYAFHYPTRLPSSYEKLNLLEIGSLHFEKPDLEKFPCLQYAYECGKIGGTTPAVLNAANEIANALFLKNEIAFFDIEKTIYKTVEAHHNVKDPSLDAILEADQWARQYANELLIKKR.

Thr-11, Gly-12, Ser-13, Ile-14, Asn-39, and Asn-122 together coordinate NADPH. Residue Lys-123 coordinates 1-deoxy-D-xylulose 5-phosphate. Glu-124 provides a ligand contact to NADPH. A Mn(2+)-binding site is contributed by Asp-148. 1-deoxy-D-xylulose 5-phosphate contacts are provided by Ser-149, Glu-150, Ser-174, and His-197. Residue Glu-150 participates in Mn(2+) binding. Gly-203 contributes to the NADPH binding site. 4 residues coordinate 1-deoxy-D-xylulose 5-phosphate: Ser-210, Asn-215, Lys-216, and Glu-219. Glu-219 is a binding site for Mn(2+).

It belongs to the DXR family. Requires Mg(2+) as cofactor. The cofactor is Mn(2+).

The enzyme catalyses 2-C-methyl-D-erythritol 4-phosphate + NADP(+) = 1-deoxy-D-xylulose 5-phosphate + NADPH + H(+). Its pathway is isoprenoid biosynthesis; isopentenyl diphosphate biosynthesis via DXP pathway; isopentenyl diphosphate from 1-deoxy-D-xylulose 5-phosphate: step 1/6. In terms of biological role, catalyzes the NADPH-dependent rearrangement and reduction of 1-deoxy-D-xylulose-5-phosphate (DXP) to 2-C-methyl-D-erythritol 4-phosphate (MEP). The chain is 1-deoxy-D-xylulose 5-phosphate reductoisomerase 1 from Bacillus cereus (strain ATCC 14579 / DSM 31 / CCUG 7414 / JCM 2152 / NBRC 15305 / NCIMB 9373 / NCTC 2599 / NRRL B-3711).